Reading from the N-terminus, the 38-residue chain is Glutathione S-transferase 2 (38 aa).

The protein belongs to the GST superfamily. Phi family.

The enzyme catalyses RX + glutathione = an S-substituted glutathione + a halide anion + H(+). Conjugation of reduced glutathione to a wide number of exogenous and endogenous hydrophobic electrophiles. In plants, may have a detoxification role against certain herbicides. This chain is Glutathione S-transferase 2, found in Populus euphratica (Euphrates poplar).